Consider the following 313-residue polypeptide: MTPRAIICLAGPTAAGKSASTLALAQRWPLEIINVDSATIYRGMDIGTAKPSAAERAQVPQHLLDIRDPAQSYSAAKFRADALRLIAEIHARGRIPLLAGGTMLYYKALREGLDDLPQADPALRAELEARAARLGWPALHAELALLDPATAARLSPNDSQRIQRALEICRLAGQPMSALLQGERRGDAPSPYRYVTLSLEPSERAALHARIAQRFDAMLAAGLVEEVRGLHARPDLHPGLPSVRCVGYRQMWSYLDGDIDLDTAREQGVAATRQLAKRQLTWLRAQPERVIIDCLAGDAVARTVDAMARALPD.

11 to 18 (GPTAAGKS) contributes to the ATP binding site. 13–18 (TAAGKS) lines the substrate pocket. Interaction with substrate tRNA stretches follow at residues 36–39 (DSAT), 160–164 (QRIQR), and 244–249 (RCVGYR).

This sequence belongs to the IPP transferase family. Monomer. Requires Mg(2+) as cofactor.

It catalyses the reaction adenosine(37) in tRNA + dimethylallyl diphosphate = N(6)-dimethylallyladenosine(37) in tRNA + diphosphate. Catalyzes the transfer of a dimethylallyl group onto the adenine at position 37 in tRNAs that read codons beginning with uridine, leading to the formation of N6-(dimethylallyl)adenosine (i(6)A). This chain is tRNA dimethylallyltransferase, found in Bordetella parapertussis (strain 12822 / ATCC BAA-587 / NCTC 13253).